The chain runs to 399 residues: Fructose-bisphosphate aldolase 1, chloroplastic (399 aa).

A chloroplast-targeting transit peptide spans 1–48; it reads MASSTATMLKASPVKSDWVKGQSLLLRQPSSVSAIRSHVAPSALTVRA. R96 is a substrate binding site. S158 is modified (phosphoserine). Substrate is bound at residue K186. S216 carries the phosphoserine modification. The active-site Proton acceptor is E226. K268 (schiff-base intermediate with dihydroxyacetone-P) is an active-site residue. 310–312 provides a ligand contact to substrate; that stretch reads SGG. Position 395 is an N6,N6,N6-trimethyllysine (K395).

It belongs to the class I fructose-bisphosphate aldolase family. Homotetramer. Post-translationally, can be trimethylated at Lys-395 by LSMT-L, but the trimethylation has no effect in vitro on the kinetic properties of the enzyme. S-glutathionylated. Highly expressed in rosettes leaves and cauline leaves.

It is found in the plastid. The protein resides in the chloroplast. It localises to the plastoglobule. The protein localises to the chloroplast stroma. It carries out the reaction beta-D-fructose 1,6-bisphosphate = D-glyceraldehyde 3-phosphate + dihydroxyacetone phosphate. It functions in the pathway carbohydrate degradation; glycolysis; D-glyceraldehyde 3-phosphate and glycerone phosphate from D-glucose: step 4/4. Plays a key role in glycolysis and gluconeogenesis. In Arabidopsis thaliana (Mouse-ear cress), this protein is Fructose-bisphosphate aldolase 1, chloroplastic.